The primary structure comprises 501 residues: Alveolysin (501 aa).

The first 32 residues, 1 to 32, serve as a signal peptide directing secretion; that stretch reads MKKKSNHLKGRKVLVSLLVSLQVFAFASISSA. Transmembrane regions (beta stranded) follow at residues 191-204, 211-220, 289-298, and 306-318; these read QNQI…NAKV, IDFNAVANGE, SNDVQTAFKL, and QASG…YENS. The Conserved undecapeptide signature appears at 460–470; it reads ECTGLAWEWWR. The Cholesterol binding motif lies at 492–493; the sequence is TL.

It belongs to the cholesterol-dependent cytolysin family. As to quaternary structure, homooligomeric pore complex of 35 to 50 subunits; when inserted in the host membrane.

It localises to the secreted. Its subcellular location is the host cell membrane. Inhibited by cholesterol and thiol reagents. Functionally, a cholesterol-dependent toxin that causes cytolysis by forming pores in cholesterol containing host membranes. After binding to target membranes, the protein undergoes a major conformation change, leading to its insertion in the host membrane and formation of an oligomeric pore complex. Cholesterol is required for binding to host cell membranes, membrane insertion and pore formation; cholesterol binding is mediated by a Thr-Leu pair in the C-terminus. Can be reversibly inactivated by oxidation. In Paenibacillus alvei (Bacillus alvei), this protein is Alveolysin (alv).